Here is a 650-residue protein sequence, read N- to C-terminus: Aminopeptidase B (650 aa).

The residue at position 2 (A2) is an N-acetylalanine. S7 carries the post-translational modification Phosphoserine. Substrate is bound at residue 298 to 302; that stretch reads GGMEN. H325 contributes to the Zn(2+) binding site. E326 acts as the Proton acceptor in catalysis. H329 and E348 together coordinate Zn(2+). K446 carries the N6-acetyllysine modification.

This sequence belongs to the peptidase M1 family. The cofactor is Zn(2+).

It is found in the secreted. It catalyses the reaction Release of N-terminal Arg and Lys from oligopeptides when P1' is not Pro. Also acts on arylamides of Arg and Lys.. Exopeptidase which selectively removes arginine and/or lysine residues from the N-terminus of several peptide substrates including Arg(0)-Leu-enkephalin, Arg(0)-Met-enkephalin and Arg(-1)-Lys(0)-somatostatin-14. Can hydrolyze leukotriene A4 (LTA-4) into leukotriene B4 (LTB-4). The sequence is that of Aminopeptidase B (RNPEP) from Homo sapiens (Human).